A 295-amino-acid polypeptide reads, in one-letter code: MIEVLTTTDSQKLLHQLNALLEQELRCQPKVCGLRLIESAHDNGLRMTARLRDFEVKDLLSLTQFFGFDTETFSLAVNLLDRFLSKMKVQPKHLGCVGLSCFYLAVKSTEEERNVPLATDLIRISQYRFTVSDLMRMEKIVLEKVCWKVKATTAFQFLQLYYSLLQENVPHERKSSLNFERLEAQLKACYCRIIFSKAKPSVLALSIIALEIQAQKYIELTEGVERLQKHSKISGRDLTFWQELVSKCLAEYSSNKCAKPNVQKLKWIVSGRTARQLRHSYYRITHLPTIPETVP.

It belongs to the cyclin family. Cyclin G subfamily.

It localises to the nucleus. Its function is as follows. May play a role in growth regulation. Is associated with G2/M phase arrest in response to DNA damage. May be an intermediate by which p53 mediates its role as an inhibitor of cellular proliferation. In Bos taurus (Bovine), this protein is Cyclin-G1 (CCNG1).